We begin with the raw amino-acid sequence, 283 residues long: BTB/POZ domain-containing protein KCTD15 (283 aa).

Residues 1–32 (MPHRKERPSGSSLHTHGSTGTAEGGNMSRLSL) form a disordered region. Residues 9-21 (SGSSLHTHGSTGT) show a composition bias toward low complexity. S31, S35, and S38 each carry phosphoserine. Residues 56 to 126 (APVHIDVGGH…LRTSKLLLPD (71 aa)) form the BTB domain.

In terms of assembly, forms oligomers, predominantly homopentamers. Interacts with KCTD1, probably forming heteropentamers depending on its abundance in a cell-type dependent manner. Interacts with TFAP2A; this interaction inhibits TFAP2A transcriptional activation.

The protein resides in the nucleus. Functionally, during embryonic development, it is involved in neural crest formation. Inhibits AP2 transcriptional activity by interaction with its activation domain. The sequence is that of BTB/POZ domain-containing protein KCTD15 (KCTD15) from Homo sapiens (Human).